Here is a 335-residue protein sequence, read N- to C-terminus: RNA polymerase sigma factor RpoS (335 aa).

Residues 57–90 (DATQMYLSEIGFSPLLTAEEEVLYARRALRGDEA) form a sigma-70 factor domain-1 region. Residues 95–165 (MIESNLRLVV…ERALMNQTRT (71 aa)) form a sigma-70 factor domain-2 region. An Interaction with polymerase core subunit RpoC motif is present at residues 119 to 122 (DLIE). The segment at 175-250 (ELNIYLRTAR…DSHNADPEFS (76 aa)) is sigma-70 factor domain-3. The interval 263–316 (WLDELNPKQKEVLARRFGLLGYEPSTLEEVGREINLTRERVRQIQVEGLRRLRE) is sigma-70 factor domain-4. The H-T-H motif DNA-binding region spans 289–308 (LEEVGREINLTRERVRQIQV).

This sequence belongs to the sigma-70 factor family. RpoS subfamily. In terms of assembly, interacts with the RNA polymerase core enzyme.

Its subcellular location is the cytoplasm. Functionally, sigma factors are initiation factors that promote the attachment of RNA polymerase to specific initiation sites and are then released. This sigma factor is the master transcriptional regulator of the stationary phase and the general stress response. May be required for the persistence of V.cholerae in aquatic habitats. The protein is RNA polymerase sigma factor RpoS of Vibrio cholerae serotype O1 (strain ATCC 39315 / El Tor Inaba N16961).